Reading from the N-terminus, the 274-residue chain is Undecaprenyl-diphosphatase 2 (274 aa).

Helical transmembrane passes span Val-47–Tyr-64, Trp-82–Phe-102, Leu-110–Ala-130, Ala-185–Leu-205, Leu-219–Ile-239, and Val-249–Leu-269.

The protein belongs to the UppP family.

The protein resides in the cell inner membrane. The catalysed reaction is di-trans,octa-cis-undecaprenyl diphosphate + H2O = di-trans,octa-cis-undecaprenyl phosphate + phosphate + H(+). In terms of biological role, catalyzes the dephosphorylation of undecaprenyl diphosphate (UPP). Confers resistance to bacitracin. The sequence is that of Undecaprenyl-diphosphatase 2 from Rhodospirillum rubrum (strain ATCC 11170 / ATH 1.1.1 / DSM 467 / LMG 4362 / NCIMB 8255 / S1).